A 314-amino-acid chain; its full sequence is MPRTDNDSWDITQSVGATALGVAAARAAETESENPLISDPFARIFVEAAGKGMWSIYADPALLTKADDLEPDLRGRLQLMIDFMATRTAFFDEFFLAAADAGVRQVVILAAGLDARSWRLPWPDGTVVYELDQPKVLDFKSTTLREHGAQPKAELVNVPIDLRQDWPKALQEAGFDASRPAVWSAEGLVRYLPAQAQDLLFERIDALSAPGSRLASNVPDSGFTDPDRLARQREDMRRMRAAAAKLVDAEITDFDDLWYPEERTPVDSWLRERGWDVSTATFAELMARYGRSIPQGAQDSMPPTLYVSARRRAG.

S-adenosyl-L-methionine-binding positions include aspartate 132 and aspartate 161 to leucine 162.

This sequence belongs to the UPF0677 family.

In terms of biological role, exhibits S-adenosyl-L-methionine-dependent methyltransferase activity. In Mycolicibacterium paratuberculosis (strain ATCC BAA-968 / K-10) (Mycobacterium paratuberculosis), this protein is Putative S-adenosyl-L-methionine-dependent methyltransferase MAP_0256.